The sequence spans 500 residues: L-arabinose isomerase (500 aa).

Positions 306, 333, 350, and 450 each coordinate Mn(2+).

It belongs to the arabinose isomerase family. In terms of assembly, homohexamer. Mn(2+) serves as cofactor.

The enzyme catalyses beta-L-arabinopyranose = L-ribulose. Its pathway is carbohydrate degradation; L-arabinose degradation via L-ribulose; D-xylulose 5-phosphate from L-arabinose (bacterial route): step 1/3. In terms of biological role, catalyzes the conversion of L-arabinose to L-ribulose. The chain is L-arabinose isomerase from Enterobacter sp. (strain 638).